The sequence spans 880 residues: Leucine--tRNA ligase (880 aa).

Positions 46–56 (PYPSGALHMGH) match the 'HIGH' region motif. Positions 638 to 642 (KMSKS) match the 'KMSKS' region motif. Lys-641 is an ATP binding site.

The protein belongs to the class-I aminoacyl-tRNA synthetase family.

The protein resides in the cytoplasm. It carries out the reaction tRNA(Leu) + L-leucine + ATP = L-leucyl-tRNA(Leu) + AMP + diphosphate. The sequence is that of Leucine--tRNA ligase from Xanthomonas oryzae pv. oryzae (strain KACC10331 / KXO85).